The chain runs to 816 residues: MAITDFFAGEIATELLKQLFTISTTAWRYKNTAKQLLTLIDSIRPTIKEIQYSGVELPAHRQAQIGMLFDTLEKGKKLTDKVLSSKRWNLYRQLTLARKMEKLEKTISNFLKNEVFTHILADVHHLRADTSVRLDRVDMSLDRVIQQVGSMKIGGGGLISEAMKRAEAMEIETNDDSEKFGVGLELGKVKVKKMMFESQGGVFGISGMGGVGKTTLAKELQRDHEVQCHFENRILFLTVSQSPLLEELRELIWGFLSGCEAGNPVPDCNFPFDGARKLVILDDVWTTQALDRLTSFKFPGCTTLVVSRSKLTEPKFTYDVEVLSEDEAISLFCLCAFGQKSIPLGFCKDLVKQVANECKGLPLALKVTGASLNGKPEMYWKGVLQRLSKGEPADDSHESRLLRQMEASLDNLDQTTKDCFLDLGAFPEDRKIPLDVLINIWIELHDIDEGNAFAILVDLSHKNLLTLGKDPRLGSLYASHYDIFVTQHDVLRDLALHLSNAGKVNRRKRLLMPKRELDLPGDWERNNDEHYIAQIVSIHTGEMNEMQWFDMEFPKAEILILNFSSDKYVLPPFISKMSRLKVLVIINNGMSPAVLHDFSIFAHLSKLRSLWLERVHVPQLSNSTTPLKNLHKMSLILCKINKSFDQTGLDVADIFPKLGDLTIDHCDDLVALPSSICGLTSLSCLSITNCPRLGELPKNLSKLQALEILRLYACPELKTLPGEICELPGLKYLDISQCVSLSCLPEEIGKLKKLEKIDMRECCFSDRPSSAVSLKSLRHVICDTDVAFMWEEVEKAVPGLKIEAAEKCFSLDWLDE.

The region spanning 1-149 (MAITDFFAGE…SLDRVIQQVG (149 aa)) is the RPW8 domain. Residues 95-111 (TLARKMEKLEKTISNFL) are a coiled coil. Positions 191–443 (VKKMMFESQG…LDVLINIWIE (253 aa)) constitute an NB-ARC domain. An ATP-binding site is contributed by 207–214 (GMGGVGKT). Residues 399 to 415 (SRLLRQMEASLDNLDQT) adopt a coiled-coil conformation. LRR repeat units follow at residues 681-704 (SLSC…SKLQ), 705-727 (ALEI…ICEL), 729-751 (GLKY…IGKL), and 753-774 (KLEK…AVSL).

The protein belongs to the disease resistance NB-LRR family.

Probable disease resistance protein. This chain is Probable disease resistance protein At4g33300, found in Arabidopsis thaliana (Mouse-ear cress).